The following is a 202-amino-acid chain: Holliday junction resolvase RecU (202 aa).

Residues T85, D87, E100, and Q119 each contribute to the Mg(2+) site.

Belongs to the RecU family. Requires Mg(2+) as cofactor.

It is found in the cytoplasm. The catalysed reaction is Endonucleolytic cleavage at a junction such as a reciprocal single-stranded crossover between two homologous DNA duplexes (Holliday junction).. In terms of biological role, endonuclease that resolves Holliday junction intermediates in genetic recombination. Cleaves mobile four-strand junctions by introducing symmetrical nicks in paired strands. Promotes annealing of linear ssDNA with homologous dsDNA. Required for DNA repair, homologous recombination and chromosome segregation. This is Holliday junction resolvase RecU from Streptococcus pyogenes serotype M5 (strain Manfredo).